Consider the following 564-residue polypeptide: MAKLLSFSDDSRSALERGVNSLADAVRVTIGPRGRNVVLEKKFGAPDIVNDGVTIAKEIELDDPFENLGAKLIQQVASKTKDKAGDGTTTATVLAQAMVHEGLRNVAAGASPIELRRGMEKAVAQLVEELAQLSQAVGGNAIHQVATVSSGGDQEVGRMVSEAMDKVSADGVITVEESKSLATELEVTEGMAFDRGYSSPYFVTDADRQICEFENALLLLTDRKISSVSDLVPILESLQKSGSPLVIIAEEVEGEALATLVVNKNRGVLQVAAVRAPSFGDRRKAALADIAVLTGGTVISEDRAMTLEKVSQDDLGQVRRITISKDNTTIVAKDENRDAVNARVASIKRELDETDSEYDREKLNERIAKLAGGVAVIKVGAPTETELKNRKLRIEDALNATRAAVEEGIVAGGGTTLLRLSKGLRKLAEQQLNGDQRTGVEIVQRALSAPARQIAINAGENGDVVISEMQRLNKGFNAISSTYEDLLGAGILDATKVVRLALQDAVSIASMMVTTELVIADKPEPPAPAGDGGGDPMGGMGGMGGMGGMGGMGGMGGMGMPGMM.

ATP is bound by residues 29–32 (TIGP), 86–90 (DGTTT), Gly-413, and Asp-493. Residues 521–541 (DKPEPPAPAGDGGGDPMGGMG) form a disordered region. The segment covering 530–541 (GDGGGDPMGGMG) has biased composition (gly residues).

This sequence belongs to the chaperonin (HSP60) family. In terms of assembly, forms a cylinder of 14 subunits composed of two heptameric rings stacked back-to-back. Interacts with the co-chaperonin GroES.

The protein localises to the cytoplasm. It catalyses the reaction ATP + H2O + a folded polypeptide = ADP + phosphate + an unfolded polypeptide.. Together with its co-chaperonin GroES, plays an essential role in assisting protein folding. The GroEL-GroES system forms a nano-cage that allows encapsulation of the non-native substrate proteins and provides a physical environment optimized to promote and accelerate protein folding. The protein is Chaperonin GroEL 2 of Prochlorococcus marinus (strain MIT 9303).